Consider the following 526-residue polypeptide: MPSIKRALISLSDKTGAVEFAQTLTKLGVEILSTGGTAKLLADAGVPVIEVADYTGFPEMLDGRVKTLHPKIHGGILGRRDLDEHVAKMEEHGIGNIDLVCVNLYPFAATIAKPNCTLEDAIENIDIGGPTMVRSAAKNWKHVAIVTDTADFPAIAAELEANNGALSDKTRFNLSRKAFSHTAQYDGMISNYLTSLSDDVLSGEPEIGEFPSQFNQSWIKVQDMRYGENPHQRAAFYRDIDPAAGSLSAYKQLQGKELSYNNIADADAAWEAVKSFDAPACVIVKHANPCGVAVAADTLTAYKLAYVTDTTSAFGGIIAFNREVDGETVKQITDNQFMEVLMAPKFTAEALEIAAAKKNVRVLEVPLEAGANRFELKRVGGGLLVQTPDIHRLNRADLKVVSKRQPTEQEWNDLMFVWNVAKYVKSNAIVFGKGGQTYGIGAGQMSRVDSTRIAARKAQDANLDLNGACAASDAFFPFRDGVDVIAEQGIKAIIHPAGSMRDQEVFDAADEHGIAMVVTDVRHFRH.

In terms of domain architecture, MGS-like spans 1-147; sequence MPSIKRALIS…KNWKHVAIVT (147 aa).

It belongs to the PurH family.

It catalyses the reaction (6R)-10-formyltetrahydrofolate + 5-amino-1-(5-phospho-beta-D-ribosyl)imidazole-4-carboxamide = 5-formamido-1-(5-phospho-D-ribosyl)imidazole-4-carboxamide + (6S)-5,6,7,8-tetrahydrofolate. It carries out the reaction IMP + H2O = 5-formamido-1-(5-phospho-D-ribosyl)imidazole-4-carboxamide. Its pathway is purine metabolism; IMP biosynthesis via de novo pathway; 5-formamido-1-(5-phospho-D-ribosyl)imidazole-4-carboxamide from 5-amino-1-(5-phospho-D-ribosyl)imidazole-4-carboxamide (10-formyl THF route): step 1/1. It participates in purine metabolism; IMP biosynthesis via de novo pathway; IMP from 5-formamido-1-(5-phospho-D-ribosyl)imidazole-4-carboxamide: step 1/1. This is Bifunctional purine biosynthesis protein PurH from Neisseria meningitidis serogroup C / serotype 2a (strain ATCC 700532 / DSM 15464 / FAM18).